Reading from the N-terminus, the 506-residue chain is Subtilisin-like serine protease Cur l 4.0101 (506 aa).

The first 15 residues, 1–15, serve as a signal peptide directing secretion; that stretch reads MKYSLIAALPALAAA. The propeptide at 16 to 135 is removed in mature form; sequence SPTFSTETIH…IERDSEVRIL (120 aa). The Inhibitor I9 domain occupies 43–134; the sequence is SYMVVFKKHV…YIERDSEVRI (92 aa). The disordered stretch occupies residues 59-79; that stretch reads HDWVQSVHSKNTQERMELRKR. Basic and acidic residues predominate over residues 69 to 79; that stretch reads NTQERMELRKR. A Peptidase S8 domain is found at 147-453; sequence PWGLARISHR…GGSSNYTDII (307 aa). Residues Asp-183 and His-215 each act as charge relay system in the active site. N-linked (GlcNAc...) asparagine glycosylation is found at Asn-245 and Asn-285. The active-site Charge relay system is Ser-381. The N-linked (GlcNAc...) asparagine glycan is linked to Asn-448. Residues 459 to 506 constitute a propeptide, removed in mature form; sequence TVKKAASKEEEKESEFRITIPSLSELEDDFEKAKESAGRKAHHVGGKL.

This sequence belongs to the peptidase S8 family.

In terms of biological role, serine protease. The sequence is that of Subtilisin-like serine protease Cur l 4.0101 from Cochliobolus lunatus (Filamentous fungus).